Here is a 1948-residue protein sequence, read N- to C-terminus: [F-actin]-monooxygenase MICAL2 (1948 aa).

The interval 2–494 (GENEDEKQAQ…KHLYITKEMD (493 aa)) is monooxygenase domain. FAD is bound by residues C97, 116–118 (EKR), 123–125 (RNN), F183, Y298, and D398. In terms of domain architecture, Calponin-homology (CH) spans 516–619 (DIRPNKLLTW…MVMYLSKFYE (104 aa)). S631 carries the phosphoserine modification. The short motif at 660–681 (RKRTPRVDAQTEENDVNKRRRQ) is the Nuclear localization signal element. 3 disordered regions span residues 664–709 (PRVD…ESGN), 753–776 (SRPPGTSHCPKLEESTPRLPPPLK), and 891–923 (KRVPHAHPPSPPSCLPSPDPAAAPSPPAADSVS). Residues 693–709 (SSRSLGSSQEYAKESGN) show a composition bias toward polar residues. A compositionally biased stretch (pro residues) spans 896 to 917 (AHPPSPPSCLPSPDPAAAPSPP). Positions 980–1042 (DTCYFCKKRV…KLHFAHCKTS (63 aa)) constitute an LIM zinc-binding domain. Positions 982, 985, 1003, 1006, 1009, 1012, 1032, and 1035 each coordinate Zn(2+). Disordered stretches follow at residues 1045–1134 (QRKR…GQDG), 1146–1185 (SEDSSSDTESDSGSIIGPCTEACEERPRLPESPPLSQPLT), and 1233–1298 (QSNS…DDVS). A compositionally biased stretch (basic and acidic residues) spans 1050–1059 (AELNQQREEE). Polar residues predominate over residues 1233 to 1243 (QSNSTPMNQRA). Positions 1254–1271 (SSSSSPSLPSSFSSASVP) are enriched in low complexity. A compositionally biased stretch (polar residues) spans 1277-1292 (DSSSPQVTYNLHSPQI). Positions 1300-1339 (TPIYLRRARAQGITKEIPLYLPHSPMLESTEHCLVSPDGE) are interaction with MAPK1. Disordered regions lie at residues 1478-1505 (QKKALGETRTPAAKAPREREVPPPKSPL), 1519-1622 (SSEA…SSKV), 1672-1726 (GDFF…QAGK), and 1739-1767 (SGPGAPVTEDTSSPTSSSAEEDVETQLSS). Over residues 1522–1534 (AGKKTSSKPETKT) the composition is skewed to basic and acidic residues. Low complexity predominate over residues 1570–1579 (KASAFFSLAS). Residues 1580-1591 (PTSKAAQASDLS) are compositionally biased toward polar residues. Residues 1672–1682 (GDFFNSPKEKG) are compositionally biased toward basic and acidic residues. S1677 bears the Phosphoserine mark. Polar residues-rich tracts occupy residues 1698–1715 (VDSTSMGQVAHPSSTGQD) and 1747–1756 (EDTSSPTSSS). In terms of domain architecture, bMERB spans 1786–1936 (KQEELKRLHK…ERTQDQHFEN (151 aa)).

The protein belongs to the Mical family. In terms of assembly, interacts with PLXNA4. Interacts with RAB1B. Interacts with MAPK1/ERK2. Interacts with RAB35, RAB8A, RAB10, RAB13 and RAB15 (in their GTP-bound forms); binding to RAB35 is of low affinity compared to other Rab proteins; at least in case of RAB8A may bind 2 molecules of RAB8A simultaneously through a high and a low affinity binding site, respectively. May interact with MAPK1/ERK2. The cofactor is FAD.

The protein localises to the nucleus. It is found in the cytoplasm. The enzyme catalyses L-methionyl-[F-actin] + NADPH + O2 + H(+) = L-methionyl-(R)-S-oxide-[F-actin] + NADP(+) + H2O. In terms of biological role, methionine monooxygenase that promotes depolymerization of F-actin by mediating oxidation of residues 'Met-44' and 'Met-47' on actin to form methionine-sulfoxide, resulting in actin filament disassembly and preventing repolymerization. Regulates the disassembly of branched actin networks also by oxidizing ARP3B-containing ARP2/3 complexes leading to ARP3B dissociation from the network. Acts as a key regulator of the SRF signaling pathway elicited by nerve growth factor and serum: mediates oxidation and subsequent depolymerization of nuclear actin, leading to increase MKL1/MRTF-A presence in the nucleus and promote SRF:MKL1/MRTF-A-dependent gene transcription. Does not activate SRF:MKL1/MRTF-A through RhoA. In Rattus norvegicus (Rat), this protein is [F-actin]-monooxygenase MICAL2.